An 809-amino-acid chain; its full sequence is MEGVGAVRFWLVVCGCLAFPPRAESVCPERCDCQHPQHLLCTNRGLRAVPKTSSLPSPQDVLTYSLGGNFITNITAFDFHRLGQLRRLDLQYNQIRSLHPKTFEKLSRLEELYLGNNLLQALVPGTLAPLRKLRILYANGNEIGRLSRGSFEGLESLVKLRLDGNVLGALPDAVFAPLGNLLYLHLESNRIRFLGKNAFSQLGKLRFLNLSANELQPSLRHAATFVPLRSLSTLILSANSLQHLGPRVFQHLPRLGLLSLSGNQLTHLAPEAFWGLEALRELRLEGNRLNQLPLTLLEPLHSLEALDLSGNELSALHPATFGHQGRLRELSLRDNALSALSGDIFAASPALYRLDLDGNGWTCDCRLRGLKRWMGNWHSQGRLLTVFVQCRHPPALRGKYLDYLDDQLLQNGSCVDPSPSPTAGSRQWPLPTSSEEGMTPPAGLSQELPLQPQPQPQQRGRLLPGVAWGGAAKELVGNRSALRLSRRGPGPHQGPSAAAPGSAPQSLDLHEKPGRGRHTRANLSQTEPTPTSEPASGTPSARDSWQRAAKQRLASEQQESAVQSVSGVGLPPLVSDPCDFNKFILCNLTVEAVSANSASVRWAVREHRSPRPQGGARFRLLFDRFGQQPKFQRFVYLPERSDSATLHELRGDTPYLVCVEGVLGGRVCPVAPRDHCAGLVTLPEAGGRGGVDYQLLTLVLLAVNALLVLLALAAWGSRWLRRKLRARRKGGAPVHVRHMYSTRRPLRSMGTGVSADFSGFQSHRPRTTVCALSEADLIEFPCDRFMDSTGGGTSGSLRREDHLLQRFAD.

A signal peptide spans 1-25; the sequence is MEGVGAVRFWLVVCGCLAFPPRAES. The LRRNT domain maps to 26–57; the sequence is VCPERCDCQHPQHLLCTNRGLRAVPKTSSLPS. The Extracellular portion of the chain corresponds to 26-694; that stretch reads VCPERCDCQH…AGGRGGVDYQ (669 aa). 12 LRR repeats span residues 61–81, 84–105, 108–129, 132–153, 156–177, 180–201, 204–223, 230–251, 254–275, 278–298, 302–323, and 326–347; these read VLTY…DFHR, QLRR…TFEK, RLEE…TLAP, KLRI…SFEG, SLVK…VFAP, NLLY…AFSQ, KLRF…RHAA, SLST…VFQH, RLGL…AFWG, ALRE…TLLE, SLEA…TFGH, and RLRE…IFAA. A glycan (N-linked (GlcNAc...) asparagine) is linked at N73. Residues 359–416 enclose the LRRCT domain; sequence NGWTCDCRLRGLKRWMGNWHSQGRLLTVFVQCRHPPALRGKYLDYLDDQLLQNGSCVD. A glycan (N-linked (GlcNAc...) asparagine) is linked at N411. 2 disordered regions span residues 412–462 and 483–563; these read GSCV…RGRL and RLSR…SAVQ. Residues 421–436 are compositionally biased toward polar residues; the sequence is PTAGSRQWPLPTSSEE. Residues 488 to 506 are compositionally biased toward low complexity; it reads GPGPHQGPSAAAPGSAPQS. Positions 521-543 are enriched in polar residues; it reads ANLSQTEPTPTSEPASGTPSARD. Residues 554 to 563 show a composition bias toward low complexity; sequence ASEQQESAVQ. N587 is a glycosylation site (N-linked (GlcNAc...) asparagine). Residues 695-715 form a helical membrane-spanning segment; that stretch reads LLTLVLLAVNALLVLLALAAW. At 716 to 809 the chain is on the cytoplasmic side; that stretch reads GSRWLRRKLR…EDHLLQRFAD (94 aa). Phosphoserine is present on S796.

Belongs to the lipopolysaccharide (LPS) receptor, a multi-protein complex containing at least CD14, MD-2 and TLR4. Interacts with TLR4; this interaction is greatly enhanced by LPS stimulation. Interacts with LPS. In terms of processing, N-glycolysaled. As to expression, highly expressed in brain, spinal cord and lung.

Its subcellular location is the membrane. Its function is as follows. Component of the TLR4 signaling complex. Mediates the innate immune response to bacterial lipopolysaccharide (LPS) leading to cytokine secretion. This is TLR4 interactor with leucine rich repeats (Tril) from Mus musculus (Mouse).